Reading from the N-terminus, the 157-residue chain is Endoribonuclease YbeY (157 aa).

His114, His118, and His124 together coordinate Zn(2+).

Belongs to the endoribonuclease YbeY family. Zn(2+) is required as a cofactor.

Its subcellular location is the cytoplasm. In terms of biological role, single strand-specific metallo-endoribonuclease involved in late-stage 70S ribosome quality control and in maturation of the 3' terminus of the 16S rRNA. The sequence is that of Endoribonuclease YbeY from Salmonella paratyphi A (strain AKU_12601).